A 648-amino-acid chain; its full sequence is DNA mismatch repair protein MutL (648 aa).

The interval 385–430 is disordered; that stretch reads STVKGPAVNEPLTENTLNQQKVKTSASTPVVHTGNSVEPKPETSTA. Over residues 396 to 430 the composition is skewed to polar residues; sequence LTENTLNQQKVKTSASTPVVHTGNSVEPKPETSTA.

The protein belongs to the DNA mismatch repair MutL/HexB family.

In terms of biological role, this protein is involved in the repair of mismatches in DNA. It is required for dam-dependent methyl-directed DNA mismatch repair. May act as a 'molecular matchmaker', a protein that promotes the formation of a stable complex between two or more DNA-binding proteins in an ATP-dependent manner without itself being part of a final effector complex. The sequence is that of DNA mismatch repair protein MutL from Agathobacter rectalis (strain ATCC 33656 / DSM 3377 / JCM 17463 / KCTC 5835 / VPI 0990) (Eubacterium rectale).